The primary structure comprises 426 residues: Serine--tRNA ligase (426 aa).

Residue 233-235 participates in L-serine binding; sequence TAE. Residue 264–266 participates in ATP binding; it reads RSE. Residue E287 participates in L-serine binding. Position 351 to 354 (351 to 354) interacts with ATP; it reads EISS. Residue S387 coordinates L-serine.

This sequence belongs to the class-II aminoacyl-tRNA synthetase family. Type-1 seryl-tRNA synthetase subfamily. In terms of assembly, homodimer. The tRNA molecule binds across the dimer.

The protein resides in the cytoplasm. It carries out the reaction tRNA(Ser) + L-serine + ATP = L-seryl-tRNA(Ser) + AMP + diphosphate + H(+). The enzyme catalyses tRNA(Sec) + L-serine + ATP = L-seryl-tRNA(Sec) + AMP + diphosphate + H(+). It participates in aminoacyl-tRNA biosynthesis; selenocysteinyl-tRNA(Sec) biosynthesis; L-seryl-tRNA(Sec) from L-serine and tRNA(Sec): step 1/1. Catalyzes the attachment of serine to tRNA(Ser). Is also able to aminoacylate tRNA(Sec) with serine, to form the misacylated tRNA L-seryl-tRNA(Sec), which will be further converted into selenocysteinyl-tRNA(Sec). The protein is Serine--tRNA ligase of Pseudomonas paraeruginosa (strain DSM 24068 / PA7) (Pseudomonas aeruginosa (strain PA7)).